The sequence spans 112 residues: UPF0342 protein SSA_1465 (112 aa).

It belongs to the UPF0342 family.

The polypeptide is UPF0342 protein SSA_1465 (Streptococcus sanguinis (strain SK36)).